The chain runs to 108 residues: uncharacterized protein (108 aa).

Belongs to the UPF0440 family.

This is an uncharacterized protein from Thermococcus kodakarensis (strain ATCC BAA-918 / JCM 12380 / KOD1) (Pyrococcus kodakaraensis (strain KOD1)).